The sequence spans 212 residues: Imidazole glycerol phosphate synthase subunit HisH (212 aa).

The 207-residue stretch at 4–210 (NIGIIDYGMG…LKWLHEKNSD (207 aa)) folds into the Glutamine amidotransferase type-1 domain. Cys82 functions as the Nucleophile in the catalytic mechanism. Residues His185 and Glu187 contribute to the active site.

In terms of assembly, heterodimer of HisH and HisF.

Its subcellular location is the cytoplasm. It catalyses the reaction 5-[(5-phospho-1-deoxy-D-ribulos-1-ylimino)methylamino]-1-(5-phospho-beta-D-ribosyl)imidazole-4-carboxamide + L-glutamine = D-erythro-1-(imidazol-4-yl)glycerol 3-phosphate + 5-amino-1-(5-phospho-beta-D-ribosyl)imidazole-4-carboxamide + L-glutamate + H(+). It carries out the reaction L-glutamine + H2O = L-glutamate + NH4(+). The protein operates within amino-acid biosynthesis; L-histidine biosynthesis; L-histidine from 5-phospho-alpha-D-ribose 1-diphosphate: step 5/9. Functionally, IGPS catalyzes the conversion of PRFAR and glutamine to IGP, AICAR and glutamate. The HisH subunit catalyzes the hydrolysis of glutamine to glutamate and ammonia as part of the synthesis of IGP and AICAR. The resulting ammonia molecule is channeled to the active site of HisF. This chain is Imidazole glycerol phosphate synthase subunit HisH, found in Prochlorococcus marinus (strain MIT 9211).